We begin with the raw amino-acid sequence, 311 residues long: Aspartate carbamoyltransferase catalytic subunit (311 aa).

The carbamoyl phosphate site is built by R55 and T56. K85 is an L-aspartate binding site. Positions 106, 135, and 138 each coordinate carbamoyl phosphate. R168 and R230 together coordinate L-aspartate. Residues L268 and P269 each contribute to the carbamoyl phosphate site.

The protein belongs to the aspartate/ornithine carbamoyltransferase superfamily. ATCase family. Heterododecamer (2C3:3R2) of six catalytic PyrB chains organized as two trimers (C3), and six regulatory PyrI chains organized as three dimers (R2).

It catalyses the reaction carbamoyl phosphate + L-aspartate = N-carbamoyl-L-aspartate + phosphate + H(+). Its pathway is pyrimidine metabolism; UMP biosynthesis via de novo pathway; (S)-dihydroorotate from bicarbonate: step 2/3. Functionally, catalyzes the condensation of carbamoyl phosphate and aspartate to form carbamoyl aspartate and inorganic phosphate, the committed step in the de novo pyrimidine nucleotide biosynthesis pathway. This is Aspartate carbamoyltransferase catalytic subunit from Cronobacter sakazakii (strain ATCC BAA-894) (Enterobacter sakazakii).